Consider the following 476-residue polypeptide: Cytochrome c oxidase subunit 1 (476 aa).

Residues 19–39 (LYYLWFSFLFGTYGFLLSVIL) form a helical membrane-spanning segment. E42 contributes to the Ca(2+) binding site. Transmembrane regions (helical) follow at residues 61-81 (MIFT…GLFG), 105-125 (ISLL…AAEF), 144-164 (LSPV…IASI), 194-214 (IIIT…GVLM), 240-260 (LFWF…FGVI), 278-298 (MILA…HHMY), 309-329 (FFTS…FNWL), and 345-365 (LLCL…VILG). H66 provides a ligand contact to Fe(II)-heme a. Position 246 (H246) interacts with Cu cation. The 1'-histidyl-3'-tyrosine (His-Tyr) cross-link spans 246–250 (HPEVY). Y250 contacts O2. Residues H295 and H296 each contribute to the Cu cation site. The Mg(2+) site is built by H374 and D375. 2 helical membrane-spanning segments follow: residues 379–399 (VIAH…FTCV) and 415–435 (TLIV…FLPM). H382 lines the heme a3 pocket. H384 contacts Fe(II)-heme a. P448 provides a ligand contact to Ca(2+). Residues 455–475 (NGWNMICSIGSTMTLFGLLIF) traverse the membrane as a helical segment.

The protein belongs to the heme-copper respiratory oxidase family. In terms of assembly, component of the cytochrome c oxidase (complex IV, CIV), a multisubunit enzyme composed of a catalytic core of 3 subunits and several supernumerary subunits. The complex exists as a monomer or a dimer and forms supercomplexes (SCs) in the inner mitochondrial membrane with ubiquinol-cytochrome c oxidoreductase (cytochrome b-c1 complex, complex III, CIII). Requires heme as cofactor. The cofactor is Cu cation.

The protein localises to the mitochondrion inner membrane. It catalyses the reaction 4 Fe(II)-[cytochrome c] + O2 + 8 H(+)(in) = 4 Fe(III)-[cytochrome c] + 2 H2O + 4 H(+)(out). It participates in energy metabolism; oxidative phosphorylation. Functionally, component of the cytochrome c oxidase, the last enzyme in the mitochondrial electron transport chain which drives oxidative phosphorylation. The respiratory chain contains 3 multisubunit complexes succinate dehydrogenase (complex II, CII), ubiquinol-cytochrome c oxidoreductase (cytochrome b-c1 complex, complex III, CIII) and cytochrome c oxidase (complex IV, CIV), that cooperate to transfer electrons derived from NADH and succinate to molecular oxygen, creating an electrochemical gradient over the inner membrane that drives transmembrane transport and the ATP synthase. Cytochrome c oxidase is the component of the respiratory chain that catalyzes the reduction of oxygen to water. Electrons originating from reduced cytochrome c in the intermembrane space (IMS) are transferred via the dinuclear copper A center (CU(A)) of subunit 2 and heme A of subunit 1 to the active site in subunit 1, a binuclear center (BNC) formed by heme A3 and copper B (CU(B)). The BNC reduces molecular oxygen to 2 water molecules using 4 electrons from cytochrome c in the IMS and 4 protons from the mitochondrial matrix. This Plasmodium berghei protein is Cytochrome c oxidase subunit 1 (COI).